The chain runs to 101 residues: Large ribosomal subunit protein uL24 (101 aa).

This sequence belongs to the universal ribosomal protein uL24 family. In terms of assembly, part of the 50S ribosomal subunit.

One of two assembly initiator proteins, it binds directly to the 5'-end of the 23S rRNA, where it nucleates assembly of the 50S subunit. Functionally, one of the proteins that surrounds the polypeptide exit tunnel on the outside of the subunit. The protein is Large ribosomal subunit protein uL24 of Streptococcus sanguinis (strain SK36).